Here is a 118-residue protein sequence, read N- to C-terminus: UPF0344 protein YisL (118 aa).

4 consecutive transmembrane segments (helical) span residues 4–24 (LHIT…SLYS), 33–53 (ITHM…AELF), 62–82 (EYAG…MLLI), and 93–113 (LWVG…HLPI).

The protein belongs to the UPF0344 family.

It localises to the cell membrane. The sequence is that of UPF0344 protein YisL (yisL) from Bacillus subtilis (strain 168).